The following is a 235-amino-acid chain: tRNA (guanine-N(1)-)-methyltransferase (235 aa).

S-adenosyl-L-methionine is bound by residues G113 and 133–138; that span reads IGDYIL.

It belongs to the RNA methyltransferase TrmD family. As to quaternary structure, homodimer.

The protein resides in the cytoplasm. It carries out the reaction guanosine(37) in tRNA + S-adenosyl-L-methionine = N(1)-methylguanosine(37) in tRNA + S-adenosyl-L-homocysteine + H(+). Its function is as follows. Specifically methylates guanosine-37 in various tRNAs. The sequence is that of tRNA (guanine-N(1)-)-methyltransferase from Wolbachia sp. subsp. Brugia malayi (strain TRS).